A 105-amino-acid polypeptide reads, in one-letter code: Pyrimidine/purine nucleoside phosphorylase (105 aa).

It belongs to the nucleoside phosphorylase PpnP family.

It catalyses the reaction a purine D-ribonucleoside + phosphate = a purine nucleobase + alpha-D-ribose 1-phosphate. The enzyme catalyses adenosine + phosphate = alpha-D-ribose 1-phosphate + adenine. It carries out the reaction cytidine + phosphate = cytosine + alpha-D-ribose 1-phosphate. The catalysed reaction is guanosine + phosphate = alpha-D-ribose 1-phosphate + guanine. It catalyses the reaction inosine + phosphate = alpha-D-ribose 1-phosphate + hypoxanthine. The enzyme catalyses thymidine + phosphate = 2-deoxy-alpha-D-ribose 1-phosphate + thymine. It carries out the reaction uridine + phosphate = alpha-D-ribose 1-phosphate + uracil. The catalysed reaction is xanthosine + phosphate = alpha-D-ribose 1-phosphate + xanthine. Functionally, catalyzes the phosphorolysis of diverse nucleosides, yielding D-ribose 1-phosphate and the respective free bases. Can use uridine, adenosine, guanosine, cytidine, thymidine, inosine and xanthosine as substrates. Also catalyzes the reverse reactions. The protein is Pyrimidine/purine nucleoside phosphorylase of Acidovorax ebreus (strain TPSY) (Diaphorobacter sp. (strain TPSY)).